Here is a 317-residue protein sequence, read N- to C-terminus: Cold tolerance protein 1 (317 aa).

This sequence belongs to the CTO1 family.

Protein required for cold tolerance. Plays a role in the regulation of phosphate uptake. In Saccharomyces cerevisiae (strain ATCC 204508 / S288c) (Baker's yeast), this protein is Cold tolerance protein 1.